The chain runs to 81 residues: Photosystem I iron-sulfur center (81 aa).

4Fe-4S ferredoxin-type domains follow at residues 1–31 (MAHSVKIYDTCIGCTQCVRACPTDVLEMVPW) and 39–68 (IASAPRTEDCVGCKRCESACPTDYLSVRVY). [4Fe-4S] cluster is bound by residues Cys-11, Cys-14, Cys-17, Cys-21, Cys-48, Cys-51, Cys-54, and Cys-58.

The eukaryotic PSI reaction center is composed of at least 11 subunits. Requires [4Fe-4S] cluster as cofactor.

The protein localises to the plastid. The protein resides in the chloroplast thylakoid membrane. The enzyme catalyses reduced [plastocyanin] + hnu + oxidized [2Fe-2S]-[ferredoxin] = oxidized [plastocyanin] + reduced [2Fe-2S]-[ferredoxin]. Apoprotein for the two 4Fe-4S centers FA and FB of photosystem I (PSI); essential for photochemical activity. FB is the terminal electron acceptor of PSI, donating electrons to ferredoxin. The C-terminus interacts with PsaA/B/D and helps assemble the protein into the PSI complex. Required for binding of PsaD and PsaE to PSI. PSI is a plastocyanin-ferredoxin oxidoreductase, converting photonic excitation into a charge separation, which transfers an electron from the donor P700 chlorophyll pair to the spectroscopically characterized acceptors A0, A1, FX, FA and FB in turn. This is Photosystem I iron-sulfur center from Welwitschia mirabilis (Tree tumbo).